The chain runs to 173 residues: Transcription factor E (173 aa).

Positions 3 to 88 (NNPIIQQVLL…TWRATFTKLP (86 aa)) constitute an HTH TFE/IIEalpha-type domain.

Belongs to the TFE family. As to quaternary structure, monomer. Interaction with RNA polymerase subunits RpoF and RpoE is necessary for Tfe stimulatory transcription activity. Able to interact with Tbp and RNA polymerase in the absence of DNA promoter. Interacts both with the preinitiation and elongation complexes.

Transcription factor that plays a role in the activation of archaeal genes transcribed by RNA polymerase. Facilitates transcription initiation by enhancing TATA-box recognition by TATA-box-binding protein (Tbp), and transcription factor B (Tfb) and RNA polymerase recruitment. Not absolutely required for transcription in vitro, but particularly important in cases where Tbp or Tfb function is not optimal. It dynamically alters the nucleic acid-binding properties of RNA polymerases by stabilizing the initiation complex and destabilizing elongation complexes. Seems to translocate with the RNA polymerase following initiation and acts by binding to the non template strand of the transcription bubble in elongation complexes. In Methanococcus aeolicus (strain ATCC BAA-1280 / DSM 17508 / OCM 812 / Nankai-3), this protein is Transcription factor E.